Reading from the N-terminus, the 235-residue chain is Derlin-3 (235 aa).

Residues Met-1–Ala-22 lie on the Cytoplasmic side of the membrane. A helical membrane pass occupies residues Ala-23 to Phe-43. The Lumenal portion of the chain corresponds to Asn-44–Val-58. The chain crosses the membrane as a helical span at residues Thr-59–Phe-79. At Arg-80–Val-98 the chain is on the cytoplasmic side. Residues Phe-99–Phe-119 traverse the membrane as a helical segment. Over Leu-120–Ala-157 the chain is Lumenal. The helical transmembrane segment at Leu-158–Val-178 threads the bilayer. The Cytoplasmic segment spans residues Gly-179–Gln-235. The disordered stretch occupies residues Pro-216–Gln-235. Residues Glu-223–Gln-235 show a composition bias toward pro residues.

It belongs to the derlin family. As to quaternary structure, forms homo- and heterooligomers with DERL2 and, to a lesser extent, with DERL1. Interacts with VCP and EDEM1. Interacts with SELENOK and SELENOS. Interacts with the signal recognition particle/SRP and the SRP receptor; in the process of endoplasmic reticulum stress-induced pre-emptive quality control. Unlike DERL1 and DERL2, restricted to several tissues. Expressed at high levels in placenta, pancreas, spleen and small intestine.

The protein localises to the endoplasmic reticulum membrane. In terms of biological role, functional component of endoplasmic reticulum-associated degradation (ERAD) for misfolded lumenal glycoproteins, but not that of misfolded nonglycoproteins. May act by forming a channel that allows the retrotranslocation of misfolded glycoproteins into the cytosol where they are ubiquitinated and degraded by the proteasome. May mediate the interaction between VCP and the misfolded glycoproteins. May be involved in endoplasmic reticulum stress-induced pre-emptive quality control, a mechanism that selectively attenuates the translocation of newly synthesized proteins into the endoplasmic reticulum and reroutes them to the cytosol for proteasomal degradation. This Homo sapiens (Human) protein is Derlin-3.